The following is a 446-amino-acid chain: Exodeoxyribonuclease 7 large subunit (446 aa).

It belongs to the XseA family. Heterooligomer composed of large and small subunits.

It is found in the cytoplasm. It catalyses the reaction Exonucleolytic cleavage in either 5'- to 3'- or 3'- to 5'-direction to yield nucleoside 5'-phosphates.. Functionally, bidirectionally degrades single-stranded DNA into large acid-insoluble oligonucleotides, which are then degraded further into small acid-soluble oligonucleotides. The polypeptide is Exodeoxyribonuclease 7 large subunit (Streptococcus agalactiae serotype Ia (strain ATCC 27591 / A909 / CDC SS700)).